Here is a 381-residue protein sequence, read N- to C-terminus: Homoserine O-succinyltransferase (381 aa).

The 316-residue stretch at 45–360 folds into the AB hydrolase-1 domain; that stretch reads NAVLVCHALN…PHGHDAFLLD (316 aa). Serine 151 acts as the Nucleophile in catalysis. Substrate is bound at residue arginine 221. Active-site residues include aspartate 321 and histidine 354. A substrate-binding site is contributed by aspartate 355.

This sequence belongs to the AB hydrolase superfamily. MetX family. As to quaternary structure, homodimer.

It localises to the cytoplasm. The catalysed reaction is L-homoserine + succinyl-CoA = O-succinyl-L-homoserine + CoA. It functions in the pathway amino-acid biosynthesis; L-methionine biosynthesis via de novo pathway; O-succinyl-L-homoserine from L-homoserine: step 1/1. In terms of biological role, transfers a succinyl group from succinyl-CoA to L-homoserine, forming succinyl-L-homoserine. This Paraburkholderia xenovorans (strain LB400) protein is Homoserine O-succinyltransferase.